We begin with the raw amino-acid sequence, 184 residues long: Photosystem I assembly protein Ycf4 (184 aa).

Helical transmembrane passes span 22-42 (LCWAIILFLGSLGFLLVGTSS) and 57-77 (ILFFPQGIVMSFYGIAGLFIS).

This sequence belongs to the Ycf4 family.

The protein localises to the plastid. It localises to the chloroplast thylakoid membrane. In terms of biological role, seems to be required for the assembly of the photosystem I complex. The chain is Photosystem I assembly protein Ycf4 from Daucus carota (Wild carrot).